The primary structure comprises 49 residues: Large ribosomal subunit protein bL33A (49 aa).

It belongs to the bacterial ribosomal protein bL33 family.

The protein is Large ribosomal subunit protein bL33A of Lactobacillus delbrueckii subsp. bulgaricus (strain ATCC 11842 / DSM 20081 / BCRC 10696 / JCM 1002 / NBRC 13953 / NCIMB 11778 / NCTC 12712 / WDCM 00102 / Lb 14).